Consider the following 324-residue polypeptide: tRNA N6-adenosine threonylcarbamoyltransferase (324 aa).

Fe cation-binding residues include His-107, His-111, and Tyr-127. Substrate contacts are provided by residues Tyr-127–Gly-131, Asp-159, Gly-172, Glu-176, and Asn-257. Asp-285 is a binding site for Fe cation.

The protein belongs to the KAE1 / TsaD family. In terms of assembly, monomer. Component of the KEOPS complex that consists of Kae1, Bud32, Cgi121 and Pcc1; the whole complex dimerizes. It depends on Fe(2+) as a cofactor.

Its subcellular location is the cytoplasm. The catalysed reaction is L-threonylcarbamoyladenylate + adenosine(37) in tRNA = N(6)-L-threonylcarbamoyladenosine(37) in tRNA + AMP + H(+). Required for the formation of a threonylcarbamoyl group on adenosine at position 37 (t(6)A37) in tRNAs that read codons beginning with adenine. Is a component of the KEOPS complex that is probably involved in the transfer of the threonylcarbamoyl moiety of threonylcarbamoyl-AMP (TC-AMP) to the N6 group of A37. Kae1 likely plays a direct catalytic role in this reaction, but requires other protein(s) of the complex to fulfill this activity. This Pyrococcus horikoshii (strain ATCC 700860 / DSM 12428 / JCM 9974 / NBRC 100139 / OT-3) protein is tRNA N6-adenosine threonylcarbamoyltransferase.